We begin with the raw amino-acid sequence, 297 residues long: Ribonuclease HIII (297 aa).

The RNase H type-2 domain occupies 81–297; it reads IPIIGTDEVG…NTKKAQALLK (217 aa). A divalent metal cation contacts are provided by D87, E88, and D192.

It belongs to the RNase HII family. RnhC subfamily. Mn(2+) is required as a cofactor. The cofactor is Mg(2+).

It is found in the cytoplasm. It catalyses the reaction Endonucleolytic cleavage to 5'-phosphomonoester.. Endonuclease that specifically degrades the RNA of RNA-DNA hybrids. This is Ribonuclease HIII from Streptococcus agalactiae serotype III (strain NEM316).